The following is a 555-amino-acid chain: uncharacterized protein (555 aa).

Residues 1–83 are Extracellular-facing; sequence MSNEDETTRL…GRRKLLCLYG (83 aa). Residues 84–104 traverse the membrane as a helical segment; sequence LVMIICIAESISMTATIPLVM. The Cytoplasmic portion of the chain corresponds to 105–125; that stretch reads DKVAEGISDENGHYDSVAVQT. The chain crosses the membrane as a helical span at residues 126-146; sequence IVSSISSSTMMIAGAISIFMA. At 147-188 the chain is on the extracellular side; it reads GKWGELSDRIGRVRVFKYMSGIRVIGLLTHVFTLSSKMKYHK. Residues 189–209 traverse the membrane as a helical segment; that stretch reads WAIVLTACIVPSFGGLFALVA. The Cytoplasmic segment spans residues 210–229; the sequence is NGNSYVSDIVKTEHRMVTIG. A helical membrane pass occupies residues 230 to 250; that stretch reads IMMSCIYATMGVGPMFGSFLV. The Extracellular portion of the chain corresponds to 251–257; the sequence is KWTHGNG. Residues 258 to 278 traverse the membrane as a helical segment; it reads FIPIYTSIAFVILALIICETI. At 279-356 the chain is on the cytoplasmic side; it reads MVEPRHETQM…LVPRHTVILL (78 aa). The tract at residues 289-311 is disordered; that stretch reads AHSQSTYTKRREKLRSQSGSDDA. The chain crosses the membrane as a helical span at residues 357 to 377; it reads IVLDILFVCGTTSCMPALILF. The Extracellular portion of the chain corresponds to 378 to 386; the sequence is STYEYKWHA. The chain crosses the membrane as a helical span at residues 387–407; sequence VELGYFISILGIGRGVVLLVV. Topologically, residues 408-428 are cytoplasmic; that stretch reads SPTLLYTLKRIYQHLNHSIDK. A helical transmembrane segment spans residues 429–449; the sequence is IDIFCIQFSMIVITLSLFVMI. Over 450–459 the chain is Extracellular; the sequence is RFGEKTPTSM. The chain crosses the membrane as a helical span at residues 460 to 480; it reads IIFALLQALSAFCSPTLQSGI. Topologically, residues 481-491 are cytoplasmic; that stretch reads IKYTSKKHTGE. The helical transmembrane segment at 492-512 threads the bilayer; that stretch reads MFGAMALVRSCVMLVIPPILL. Over 513 to 523 the chain is Extracellular; the sequence is KLYGSTVSVNP. A helical transmembrane segment spans residues 524-544; sequence SLFMYIPFSTSIVAILLTFFL. Residues 545-555 lie on the Cytoplasmic side of the membrane; that stretch reads RIYKNPPLDGP.

The protein localises to the membrane. This is an uncharacterized protein from Saccharomyces cerevisiae (strain ATCC 204508 / S288c) (Baker's yeast).